The following is a 427-amino-acid chain: 3-phosphoshikimate 1-carboxyvinyltransferase (427 aa).

3-phosphoshikimate-binding residues include lysine 22, serine 23, and arginine 27. Lysine 22 serves as a coordination point for phosphoenolpyruvate. Glycine 96 and arginine 124 together coordinate phosphoenolpyruvate. Residues serine 169, serine 170, glutamine 171, serine 197, aspartate 313, asparagine 336, and lysine 340 each coordinate 3-phosphoshikimate. Glutamine 171 provides a ligand contact to phosphoenolpyruvate. Residue aspartate 313 is the Proton acceptor of the active site. Residues arginine 344, arginine 386, and lysine 411 each contribute to the phosphoenolpyruvate site.

It belongs to the EPSP synthase family. As to quaternary structure, monomer.

It localises to the cytoplasm. The enzyme catalyses 3-phosphoshikimate + phosphoenolpyruvate = 5-O-(1-carboxyvinyl)-3-phosphoshikimate + phosphate. The protein operates within metabolic intermediate biosynthesis; chorismate biosynthesis; chorismate from D-erythrose 4-phosphate and phosphoenolpyruvate: step 6/7. Functionally, catalyzes the transfer of the enolpyruvyl moiety of phosphoenolpyruvate (PEP) to the 5-hydroxyl of shikimate-3-phosphate (S3P) to produce enolpyruvyl shikimate-3-phosphate and inorganic phosphate. This Salmonella newport (strain SL254) protein is 3-phosphoshikimate 1-carboxyvinyltransferase.